Here is a 254-residue protein sequence, read N- to C-terminus: Very-long-chain (3R)-3-hydroxyacyl-CoA dehydratase 2 (254 aa).

A compositionally biased stretch (low complexity) spans 1-10; that stretch reads MAAAAATAAT. The interval 1–34 is disordered; the sequence is MAAAAATAATKGNGGGSGRVGAGDSSGARKKKGP. An N-acetylalanine modification is found at Ala2. Topologically, residues 2–41 are cytoplasmic; sequence AAAAATAATKGNGGGSGRVGAGDSSGARKKKGPGPVATAY. Positions 12 to 21 are enriched in gly residues; that stretch reads GNGGGSGRVG. The helical transmembrane segment at 42-60 threads the bilayer; it reads LVIYNVVMTAGWLVIAVGL. Over 61 to 79 the chain is Lumenal; that stretch reads VRAYLAKGSYHSLYYSIER. A helical membrane pass occupies residues 80-97; sequence PLKFFQTGALLEILHCAI. Residues 98-107 lie on the Cytoplasmic side of the membrane; that stretch reads GIVPSSVVLT. A helical transmembrane segment spans residues 108-125; it reads SFQVMSRVFLIWAVTHSV. At 126-130 the chain is on the lumenal side; the sequence is KEVQS. The chain crosses the membrane as a helical span at residues 131 to 146; the sequence is EDSVLLFVIAWTITEI. Residues 147 to 169 are Cytoplasmic-facing; it reads IRYSFYTFSLLNHLPYIIKWARY. A helical transmembrane segment spans residues 170–187; that stretch reads TLFIVLYPMGVTGELLTI. Catalysis depends on residues Tyr176 and Glu183. Residues 188–217 are Lumenal-facing; sequence YAALPFVRQAGLYSISLPNKYNFSFDYHAF. Residues 198–214 are may be involved in interaction with TECR; sequence GLYSISLPNKYNFSFDY. Asn209 is a glycosylation site (N-linked (GlcNAc...) asparagine). Residues 218–235 traverse the membrane as a helical segment; that stretch reads LILIMISYIPLFPQLYFH. Topologically, residues 236–254 are cytoplasmic; that stretch reads MIHQRRKVLSHTEEHKKFE.

The protein belongs to the very long-chain fatty acids dehydratase HACD family. As to quaternary structure, may interact with enzymes of the ELO family (including ELOVL1); with those enzymes that mediate condensation, the first of the four steps of the reaction cycle responsible for fatty acids elongation, may be part of a larger fatty acids elongase complex. Interacts with BCAP31. Interacts with TECR.

It is found in the endoplasmic reticulum membrane. The enzyme catalyses a very-long-chain (3R)-3-hydroxyacyl-CoA = a very-long-chain (2E)-enoyl-CoA + H2O. It catalyses the reaction (3R)-hydroxyhexadecanoyl-CoA = (2E)-hexadecenoyl-CoA + H2O. It carries out the reaction (3R)-hydroxyoctadecanoyl-CoA = (2E)-octadecenoyl-CoA + H2O. The catalysed reaction is (3R)-hydroxyeicosanoyl-CoA = (2E)-eicosenoyl-CoA + H2O. The enzyme catalyses (3R)-hydroxydocosanoyl-CoA = (2E)-docosenoyl-CoA + H2O. It catalyses the reaction (3R)-hydroxytetracosanoyl-CoA = (2E)-tetracosenoyl-CoA + H2O. It carries out the reaction (3R)-hydroxyhexacosanoyl-CoA = (2E)-hexacosenoyl-CoA + H2O. Its pathway is lipid metabolism; fatty acid biosynthesis. Catalyzes the third of the very long-chain fatty acids (VLCFA) elongation four-step cycle (condensation, reduction, dehydration, and reduction). This endoplasmic reticulum-elongation process is characterized by the addition of two carbons to the lipid chain through each cycle. This enzyme catalyzes the dehydration of the 3-hydroxyacyl-CoA intermediate into trans-2,3-enoyl-CoA, within each cycle of elongation. Therefore, it participates in the production of various VLCFAs involved in multiple biological processes as precursors of membrane lipids and lipid mediators. This Mus musculus (Mouse) protein is Very-long-chain (3R)-3-hydroxyacyl-CoA dehydratase 2.